We begin with the raw amino-acid sequence, 171 residues long: Shikimate kinase (171 aa).

Position 13 to 18 (13 to 18 (GVGKST)) interacts with ATP. Serine 17 is a binding site for Mg(2+). Residues aspartate 35, arginine 59, and glycine 81 each contribute to the substrate site. Residue arginine 118 coordinates ATP. Residue arginine 136 participates in substrate binding. Arginine 153 contributes to the ATP binding site.

It belongs to the shikimate kinase family. As to quaternary structure, monomer. Mg(2+) is required as a cofactor.

The protein resides in the cytoplasm. The enzyme catalyses shikimate + ATP = 3-phosphoshikimate + ADP + H(+). It participates in metabolic intermediate biosynthesis; chorismate biosynthesis; chorismate from D-erythrose 4-phosphate and phosphoenolpyruvate: step 5/7. In terms of biological role, catalyzes the specific phosphorylation of the 3-hydroxyl group of shikimic acid using ATP as a cosubstrate. The protein is Shikimate kinase of Streptomyces coelicolor (strain ATCC BAA-471 / A3(2) / M145).